A 107-amino-acid polypeptide reads, in one-letter code: Frataxin (107 aa).

The protein belongs to the frataxin family. In terms of assembly, monomer.

The protein localises to the cytoplasm. Functionally, promotes the assembly and repair of iron-sulfur clusters by delivering Fe(2+) to proteins involved in these pathways. This chain is Frataxin (YFH1), found in Trachipleistophora hominis (Microsporidian parasite).